We begin with the raw amino-acid sequence, 122 residues long: Small ribosomal subunit protein uS13c (122 aa).

Positions 102–122 are disordered; that stretch reads RTRTNARTRRGAKKTVAGKKK.

Belongs to the universal ribosomal protein uS13 family. As to quaternary structure, part of the 30S ribosomal subunit.

The protein localises to the plastid. The protein resides in the chloroplast. Its function is as follows. Located at the top of the head of the 30S subunit, it contacts several helices of the 16S rRNA. This Guillardia theta (Cryptophyte) protein is Small ribosomal subunit protein uS13c.